A 519-amino-acid chain; its full sequence is Acetylcholine receptor subunit gamma (519 aa).

An N-terminal signal peptide occupies residues 1-22 (MHGGQGPQLLLLLLATCLGAQS). Residues 23-240 (RNQEERLLAD…VVFYLLIQRK (218 aa)) lie on the Extracellular side of the membrane. Asn-52 and Asn-163 each carry an N-linked (GlcNAc...) asparagine glycan. A disulfide bond links Cys-150 and Cys-164. 3 helical membrane passes run 241 to 265 (PLFY…IYFL), 274 to 292 (CTVA…FLVA), and 308 to 329 (YLTF…VLNV). At 330–476 (SLRSPHTHSM…WLLVGRVLDR (147 aa)) the chain is on the cytoplasmic side. A helical transmembrane segment spans residues 477 to 497 (VCFLAMLSLFICGTAGIFLMA).

This sequence belongs to the ligand-gated ion channel (TC 1.A.9) family. Acetylcholine receptor (TC 1.A.9.1) subfamily. Gamma/CHRNG sub-subfamily. As to quaternary structure, pentamer of two alpha chains, and one each of the beta, delta, and gamma (in immature muscle) or epsilon (in mature muscle) chains.

The protein localises to the postsynaptic cell membrane. Its subcellular location is the cell membrane. The enzyme catalyses K(+)(in) = K(+)(out). The catalysed reaction is Na(+)(in) = Na(+)(out). In terms of biological role, after binding acetylcholine, the AChR responds by an extensive change in conformation that affects all subunits and leads to opening of an ion-conducting channel across the plasma membrane. The sequence is that of Acetylcholine receptor subunit gamma (Chrng) from Rattus norvegicus (Rat).